Consider the following 270-residue polypeptide: Type III pantothenate kinase (270 aa).

6-13 (DAGNTNIV) provides a ligand contact to ATP. Position 107 to 110 (107 to 110 (GADR)) interacts with substrate. Asp-109 (proton acceptor) is an active-site residue. Position 129 (Asp-129) interacts with K(+). Thr-132 lines the ATP pocket. Thr-184 serves as a coordination point for substrate.

This sequence belongs to the type III pantothenate kinase family. As to quaternary structure, homodimer. NH4(+) serves as cofactor. The cofactor is K(+).

The protein resides in the cytoplasm. The catalysed reaction is (R)-pantothenate + ATP = (R)-4'-phosphopantothenate + ADP + H(+). It functions in the pathway cofactor biosynthesis; coenzyme A biosynthesis; CoA from (R)-pantothenate: step 1/5. Its function is as follows. Catalyzes the phosphorylation of pantothenate (Pan), the first step in CoA biosynthesis. The sequence is that of Type III pantothenate kinase from Gluconobacter oxydans (strain 621H) (Gluconobacter suboxydans).